The following is a 109-amino-acid chain: Photosystem II reaction center Psb28 protein (109 aa).

Belongs to the Psb28 family. As to quaternary structure, part of the photosystem II complex.

The protein resides in the plastid. It localises to the chloroplast thylakoid membrane. This is Photosystem II reaction center Psb28 protein from Cyanidioschyzon merolae (strain NIES-3377 / 10D) (Unicellular red alga).